The primary structure comprises 212 residues: MLRILTKDMLETDRRAFDEMFRARAAVFRDRLGWQVDVRDQWERDRYDEAEDPVYLVTQQPSGTLTGSLRLLPTTGATMLKSEFRHFFDQPIDVDSPTTWECTRFCLHPHAGDMKQSRAVATELLSGLCDLALDTGIENIVGVYDVAMVAVYRRIGWRPTPLARSRPEIGKLYVGLWDVTADNCRTLRANLSRLLEQASPYPARVLVDGGMR.

Belongs to the autoinducer synthase family.

The enzyme catalyses a fatty acyl-[ACP] + S-adenosyl-L-methionine = an N-acyl-L-homoserine lactone + S-methyl-5'-thioadenosine + holo-[ACP] + H(+). Required for the synthesis of autoinducer molecules which bind to RaiR and that are involved in the restriction of nodule number. The polypeptide is Acyl-homoserine-lactone synthase (raiI) (Rhizobium etli).